A 198-amino-acid polypeptide reads, in one-letter code: Tumor necrosis factor receptor superfamily member 22 (198 aa).

The Cytoplasmic segment spans residues M1 to R20. A helical; Signal-anchor for type II membrane protein membrane pass occupies residues L21–L41. At E42–R198 the chain is on the extracellular side. 3 TNFR-Cys repeats span residues K47–C82, K84–C124, and Q125–C165. 9 disulfide bridges follow: C48–C59, C60–C73, C63–C82, C85–C100, C103–C116, C106–C124, C126–C141, C144–C157, and C147–C165. N62 carries N-linked (GlcNAc...) asparagine glycosylation. N158 carries N-linked (GlcNAc...) asparagine glycosylation.

Ubiquitous.

It localises to the cell membrane. The protein localises to the secreted. Receptor for the cytotoxic ligand TNFSF10/TRAIL. Lacks a cytoplasmic death domain and hence is not capable of inducing apoptosis. Protects cells against TRAIL mediated apoptosis possibly through ligand competition. Cannot induce the NF-kappa-B pathway. The polypeptide is Tumor necrosis factor receptor superfamily member 22 (Tnfrsf22) (Mus musculus (Mouse)).